We begin with the raw amino-acid sequence, 299 residues long: Methionine aminopeptidase (299 aa).

His64 provides a ligand contact to substrate. A divalent metal cation contacts are provided by Asp84, Asp95, and His158. Residue His166 coordinates substrate. A divalent metal cation is bound by residues Glu191 and Glu284.

Belongs to the peptidase M24A family. Methionine aminopeptidase archaeal type 2 subfamily. As to quaternary structure, monomer. Co(2+) is required as a cofactor. It depends on Zn(2+) as a cofactor. The cofactor is Mn(2+). Fe(2+) serves as cofactor.

It carries out the reaction Release of N-terminal amino acids, preferentially methionine, from peptides and arylamides.. Its function is as follows. Removes the N-terminal methionine from nascent proteins. The N-terminal methionine is often cleaved when the second residue in the primary sequence is small and uncharged (Met-Ala-, Cys, Gly, Pro, Ser, Thr, or Val). The polypeptide is Methionine aminopeptidase (Methanothermobacter thermautotrophicus (strain ATCC 29096 / DSM 1053 / JCM 10044 / NBRC 100330 / Delta H) (Methanobacterium thermoautotrophicum)).